A 572-amino-acid polypeptide reads, in one-letter code: AAA ATPase forming ring-shaped complexes (572 aa).

The tract at residues 1–22 is disordered; it reads MTEPRHESGSAAPQRPATDPVQ. Residues 21 to 67 are a coiled coil; that stretch reads VQRQVNLLRDQKRNLDKQAAALASQNEKLVRLLNASRQEIVGLKKTL. 270–275 lines the ATP pocket; the sequence is GNGKTL. The span at 527–539 shows a compositional bias: acidic residues; the sequence is HEQQDLPDTEDSE. The segment at 527-572 is disordered; the sequence is HEQQDLPDTEDSEDWARLTGRRGDTIDSVHMASHRPQGEPGPGATP.

The protein belongs to the AAA ATPase family. As to quaternary structure, homohexamer. Assembles into a hexameric ring structure.

This is AAA ATPase forming ring-shaped complexes from Kocuria rhizophila (strain ATCC 9341 / DSM 348 / NBRC 103217 / DC2201).